Consider the following 1347-residue polypeptide: Protocadherin-11 X-linked (1347 aa).

A signal peptide spans 1–23 (MDLLSGTYIFAVLLACVVFHSGA). Over 24–812 (QEKNYTIREE…VSSPTSDYVK (789 aa)) the chain is Extracellular. 7 consecutive Cadherin domains span residues 26–139 (KNYT…APLF), 140–249 (PATV…HPVF), 250–355 (KETE…VPSI), 362–466 (NPVN…APVF), 467–570 (TQSF…SPVF), 571–673 (THNE…KPVF), and 677–795 (PSNY…APVT). Asparagine 27, asparagine 48, and asparagine 54 each carry an N-linked (GlcNAc...) asparagine glycan. N-linked (GlcNAc...) asparagine glycosylation occurs at asparagine 344. Asparagine 553 is a glycosylation site (N-linked (GlcNAc...) asparagine). An N-linked (GlcNAc...) asparagine glycan is attached at asparagine 773. A helical membrane pass occupies residues 813 to 833 (ILVAAVAGTITVVVVIFITAV). Over 834 to 1347 (VRCRQAPHLK…DSPVMEEHPL (514 aa)) the chain is Cytoplasmic. Disordered stretches follow at residues 1057 to 1091 (LPEGSQESSSDGGLGDHDAGSLTSTSHGLPLGYPQ), 1097 to 1116 (RATPSNRTEGDGNSDPESTF), and 1325 to 1347 (TFTPRQQARPSRGDSPVMEEHPL).

It localises to the cell membrane. In terms of biological role, potential calcium-dependent cell-adhesion protein. The chain is Protocadherin-11 X-linked (PCDH11X) from Pan paniscus (Pygmy chimpanzee).